The sequence spans 68 residues: Large ribosomal subunit protein uL29 (68 aa).

It belongs to the universal ribosomal protein uL29 family.

This is Large ribosomal subunit protein uL29 from Roseobacter denitrificans (strain ATCC 33942 / OCh 114) (Erythrobacter sp. (strain OCh 114)).